Here is a 331-residue protein sequence, read N- to C-terminus: Glycerophosphodiester phosphodiesterase 1 (331 aa).

The Cytoplasmic portion of the chain corresponds to 1–3 (MWL). The chain crosses the membrane as a helical span at residues 4–24 (WEDQGGLLGPFSFVLVLLLVV). Residues 25–248 (TRSPFNACVL…PRYSVFWKQS (224 aa)) are Lumenal-facing. Positions 65–331 (VSAIAHRGGS…SMLEDCAPHF (267 aa)) constitute a GP-PDE domain. Positions 97 and 99 each coordinate Mg(2+). Asn-168 carries an N-linked (GlcNAc...) asparagine glycan. Asp-174 contacts Mg(2+). Residues 249-269 (VFVVLDILLDWSMHNVLWYLC) traverse the membrane as a helical segment. The Cytoplasmic segment spans residues 270 to 331 (GISAFLMQKD…SMLEDCAPHF (62 aa)).

The protein belongs to the glycerophosphoryl diester phosphodiesterase family. In terms of assembly, interacts with PRAF2. Interacts with RGS16. Requires Mg(2+) as cofactor. Post-translationally, N-glycosylated. In terms of tissue distribution, widely expressed. Highly expressed in the brain and spinal cord, followed by kidney, liver, and testis. In contrast, little or no expression is detected in the heart or spleen.

It localises to the cell membrane. It is found in the cytoplasmic vesicle membrane. It carries out the reaction sn-glycero-3-phospho-1D-myo-inositol + H2O = myo-inositol + sn-glycerol 3-phosphate + H(+). The catalysed reaction is 1-O-(1Z-octadecenyl)-sn-glycero-3-phospho-(N-5Z,8Z,11Z,14Z-eicosatetraenoyl)-ethanolamine + H2O = 1-O-(1Z-octadecenyl)-sn-glycero-3-phosphate + N-(5Z,8Z,11Z,14Z-eicosatetraenoyl)-ethanolamine + H(+). The enzyme catalyses 1-O-(1Z-octadecenyl)-sn-glycero-3-phospho-(N-9Z-octadecenoyl)-ethanolamine + H2O = 1-O-(1Z-octadecenyl)-sn-glycero-3-phosphate + N-(9Z-octadecenoyl) ethanolamine + H(+). It catalyses the reaction 1-O-(1Z-octadecenyl)-sn-glycero-3-phospho-N-hexadecanoyl-ethanolamine + H2O = 1-O-(1Z-octadecenyl)-sn-glycero-3-phosphate + N-hexadecanoylethanolamine + H(+). It carries out the reaction N-(4Z,7Z,10Z,13Z,16Z,19Z)-docosahexaenoyl-sn-glycero-3-phosphoethanolamine + H2O = N-(4Z,7Z,10Z,13Z,16Z,19Z)-docosahexaenoyl ethanolamine + sn-glycerol 3-phosphate + H(+). The catalysed reaction is N-eicosanoyl-sn-glycero-3-phosphoethanolamine + H2O = N-eicosanoyl ethanolamine + sn-glycerol 3-phosphate + H(+). The enzyme catalyses N-hexadecanoyl-sn-glycero-3-phosphoethanolamine + H2O = N-hexadecanoylethanolamine + sn-glycerol 3-phosphate + H(+). It catalyses the reaction N-(9Z-octadecenoyl)-sn-glycero-3-phosphoethanolamine + H2O = N-(9Z-octadecenoyl) ethanolamine + sn-glycerol 3-phosphate + H(+). It carries out the reaction N-(5Z,8Z,11Z,14Z-eicosatetraenoyl)-sn-glycero-3-phosphoethanolamine + H2O = N-(5Z,8Z,11Z,14Z-eicosatetraenoyl)-ethanolamine + sn-glycerol 3-phosphate + H(+). Inhibited by EDTA, calcium chloride, and zinc chloride. Enhanced by magnesium chloride. Glycerophosphodiester phosphodiesterase activity can be modulated by G-protein signaling pathways. Hydrolyzes the phosphodiester bond of glycerophosphodiesters such as glycerophosphoinositol (GroPIns) and glycerophosphoethanolamine (GroPEth), to yield a glycerol phosphate and an alcohol. Hydrolyzes glycerophospho-N-acylethanolamines to N-acylethanolamines in the brain and participates in bioactive N-acylethanolamine biosynthesis such as anandamide (an endocannabinoid), N-palmitoylethanolamine (an anti-inflammatory), and N-oleoylethanolamine (an anorexic). In addition, has a lysophospholipase D activity by hydrolyzing N-acyl-lysoplasmenylethanolamine (N-acyl-lysoPlsEt) to N-acylethanolamine. However lysophospholipase D activity is lower than glycerophosphodiester phosphodiesterase activity. Has little or no activity towards glycerophosphocholine. The polypeptide is Glycerophosphodiester phosphodiesterase 1 (Mus musculus (Mouse)).